The following is a 394-amino-acid chain: Olfactomedin-like protein 3B (394 aa).

A signal peptide spans 1–18; that stretch reads MKATIFFLLLTVLAHSRS. A coiled-coil region spans residues 29–94; sequence LENRMLAMEE…RVDRVEREMD (66 aa). In terms of domain architecture, Olfactomedin-like spans 132–383; that stretch reads VCVNIISSLK…QILYKLELKK (252 aa). A disulfide bridge connects residues Cys-133 and Cys-310. N-linked (GlcNAc...) asparagine glycosylation is found at Asn-169, Asn-204, and Asn-233.

The protein belongs to the OLFML3 family.

The protein localises to the secreted. In terms of biological role, secreted scaffold protein that plays an essential role in dorsoventral patterning during early development. Stabilizes axial formation by restricting chordin (CHRD) activity on the dorsal side. Acts by facilitating the association between the tolloid proteases and their substrate chordin (CHRD), leading to enhance chordin (CHRD) degradation. The protein is Olfactomedin-like protein 3B (olfml3b) of Danio rerio (Zebrafish).